The primary structure comprises 78 residues: Beta-defensin 135 (78 aa).

Residues 1-24 form the signal peptide; that stretch reads MATRSVLLALVVLNLLFYVPPGRS. 2 cysteine pairs are disulfide-bonded: cysteine 37/cysteine 64 and cysteine 48/cysteine 66.

This sequence belongs to the beta-defensin family.

The protein resides in the secreted. In terms of biological role, has antibacterial activity. This Pan troglodytes (Chimpanzee) protein is Beta-defensin 135 (DEFB135).